The sequence spans 62 residues: Large ribosomal subunit protein uL30 (62 aa).

The protein belongs to the universal ribosomal protein uL30 family. Part of the 50S ribosomal subunit.

This chain is Large ribosomal subunit protein uL30, found in Geobacillus kaustophilus (strain HTA426).